The chain runs to 1014 residues: Isoleucine--tRNA ligase (1014 aa).

The 'HIGH' region signature appears at 48–58 (PTANGRPGIHH). The 'KMSKS' region signature appears at 628–632 (KMSKS). Lys-631 serves as a coordination point for ATP.

The protein belongs to the class-I aminoacyl-tRNA synthetase family. IleS type 2 subfamily. Monomer. It depends on Zn(2+) as a cofactor.

It is found in the cytoplasm. It carries out the reaction tRNA(Ile) + L-isoleucine + ATP = L-isoleucyl-tRNA(Ile) + AMP + diphosphate. Its function is as follows. Catalyzes the attachment of isoleucine to tRNA(Ile). As IleRS can inadvertently accommodate and process structurally similar amino acids such as valine, to avoid such errors it has two additional distinct tRNA(Ile)-dependent editing activities. One activity is designated as 'pretransfer' editing and involves the hydrolysis of activated Val-AMP. The other activity is designated 'posttransfer' editing and involves deacylation of mischarged Val-tRNA(Ile). In Dehalococcoides mccartyi (strain CBDB1), this protein is Isoleucine--tRNA ligase.